A 175-amino-acid polypeptide reads, in one-letter code: Ribonuclease M5 (175 aa).

In terms of domain architecture, Toprim spans 3–83 (NEIIIVEGKS…DVDVFNAFVS (81 aa)). Mg(2+) contacts are provided by Glu-9, Asp-57, and Asp-59.

Belongs to the ribonuclease M5 family. It depends on Mg(2+) as a cofactor.

It localises to the cytoplasm. It carries out the reaction Endonucleolytic cleavage of RNA, removing 21 and 42 nucleotides, respectively, from the 5'- and 3'-termini of a 5S-rRNA precursor.. Functionally, required for correct processing of both the 5' and 3' ends of 5S rRNA precursor. Cleaves both sides of a double-stranded region yielding mature 5S rRNA in one step. The protein is Ribonuclease M5 of Mesoplasma florum (strain ATCC 33453 / NBRC 100688 / NCTC 11704 / L1) (Acholeplasma florum).